Here is a 125-residue protein sequence, read N- to C-terminus: uncharacterized protein (125 aa).

A run of 2 helical transmembrane segments spans residues 22–44 (TPLM…NAAV) and 54–73 (YMGI…SVLM).

The protein belongs to the bacteriophage holin family. Cp-1 holin subfamily.

It localises to the cell membrane. This is an uncharacterized protein from Clostridium acetobutylicum (strain ATCC 824 / DSM 792 / JCM 1419 / IAM 19013 / LMG 5710 / NBRC 13948 / NRRL B-527 / VKM B-1787 / 2291 / W).